We begin with the raw amino-acid sequence, 684 residues long: Glycine--tRNA ligase beta subunit (684 aa).

Belongs to the class-II aminoacyl-tRNA synthetase family. As to quaternary structure, tetramer of two alpha and two beta subunits.

The protein resides in the cytoplasm. It carries out the reaction tRNA(Gly) + glycine + ATP = glycyl-tRNA(Gly) + AMP + diphosphate. In Pseudomonas aeruginosa (strain ATCC 15692 / DSM 22644 / CIP 104116 / JCM 14847 / LMG 12228 / 1C / PRS 101 / PAO1), this protein is Glycine--tRNA ligase beta subunit.